The primary structure comprises 401 residues: Renin-2 (401 aa).

The first 25 residues, 1-25 (MDRRRMPLWALLLLWSPCTFSLPTG), serve as a signal peptide directing secretion. The propeptide at 26–63 (TTFERIPLKKMPSVREILEERGVDMTRLSAEWDVFTKR) is activation peptide. One can recognise a Peptidase A1 domain in the interval 83–398 (YYGEIGIGTP…DRHNNRIGFA (316 aa)). The active site involves aspartate 101. 2 disulfide bridges follow: cysteine 114–cysteine 121 and cysteine 277–cysteine 281. The active site involves aspartate 286. The cysteines at positions 320 and 357 are disulfide-linked.

Belongs to the peptidase A1 family. As to quaternary structure, dimer of a heavy chain and a light chain joined by a disulfide bond. Submandibular gland.

The protein localises to the secreted. The catalysed reaction is Cleavage of Leu-|-Xaa bond in angiotensinogen to generate angiotensin I.. In terms of biological role, renin is a highly specific endopeptidase, related to pepsin, whose only known function is to generate angiotensin I from angiotensinogen in the plasma, initiating a cascade of reactions that produce an elevation of blood pressure and increased sodium retention by the kidney. The chain is Renin-2 from Mus musculus (Mouse).